The primary structure comprises 622 residues: Apical membrane antigen 1 (622 aa).

An N-terminal signal peptide occupies residues Met-1–Gly-24. Residues Gln-25–Lys-546 are Extracellular-facing. 5 cysteine pairs are disulfide-bonded: Cys-149–Cys-302, Cys-217–Cys-247, Cys-263–Cys-275, Cys-320–Cys-418, and Cys-337–Cys-409. Asn-162 is a glycosylation site (N-linked (GlcNAc...) asparagine). N-linked (GlcNAc...) asparagine glycosylation is found at Asn-286, Asn-371, Asn-421, Asn-422, and Asn-499. Cystine bridges form between Cys-443/Cys-502, Cys-490/Cys-507, and Cys-492/Cys-509. Residues Ile-547–Tyr-567 form a helical membrane-spanning segment. Over Lys-568–Tyr-622 the chain is Cytoplasmic. Residues Lys-578–Glu-594 show a composition bias toward basic and acidic residues. The interval Lys-578–Lys-607 is disordered.

This sequence belongs to the apicomplexan parasites AMA1 family.

It localises to the membrane. Involved in parasite invasion of erythrocytes. This Plasmodium falciparum (isolate FC27 / Papua New Guinea) protein is Apical membrane antigen 1 (AMA-1).